The sequence spans 913 residues: Eukaryotic translation initiation factor 3 subunit C (913 aa).

The segment at 1-31 is disordered; that stretch reads MSRFFANGSDSESESSEEEVQASNFNKANNF. Residues 11–20 show a composition bias toward acidic residues; that stretch reads SESESSEEEV. The segment covering 21–31 has biased composition (polar residues); the sequence is QASNFNKANNF. Phosphoserine is present on residues S34, S165, S177, and S186. 2 disordered regions span residues 157 to 195 and 208 to 285; these read FREA…AGTG and PTKV…EDGE. The segment covering 162 to 171 has biased composition (acidic residues); it reads DQESDVDEGE. Positions 172–184 are enriched in basic and acidic residues; sequence GEAHDSDAERAGA. Positions 214 to 239 are enriched in acidic residues; that stretch reads DEDDSDDSIDWDSDTESETESSEDEN. Over residues 244-263 the composition is skewed to basic and acidic residues; sequence MRERFLKRTTEKEDKDDDKR. Residues 264 to 276 show a composition bias toward basic residues; the sequence is KDKRKEQKHKVRK. Residues 645–821 enclose the PCI domain; it reads FHMHINLELL…ETVVMHRSEP (177 aa). The interval 856 to 913 is disordered; that stretch reads RGNMGNRDRGYNRNQNNQGGNWGGQRRDNRNQRNRNQRGHHKQQQQQQQQQVQTIEEE. A compositionally biased stretch (basic residues) spans 887-898; that stretch reads QRNRNQRGHHKQ.

The protein belongs to the eIF-3 subunit C family. As to quaternary structure, component of the eukaryotic translation initiation factor 3 (eIF-3) complex. The eIF-3 complex interacts with pix.

Its subcellular location is the cytoplasm. In terms of biological role, component of the eukaryotic translation initiation factor 3 (eIF-3) complex, which is involved in protein synthesis of a specialized repertoire of mRNAs and, together with other initiation factors, stimulates binding of mRNA and methionyl-tRNAi to the 40S ribosome. The eIF-3 complex specifically targets and initiates translation of a subset of mRNAs involved in cell proliferation. This Drosophila virilis (Fruit fly) protein is Eukaryotic translation initiation factor 3 subunit C.